The sequence spans 378 residues: 23S rRNA (uracil(747)-C(5))-methyltransferase RlmC (378 aa).

4 residues coordinate [4Fe-4S] cluster: C3, C11, C14, and C87. Residues Q212, F241, E262, and N309 each coordinate S-adenosyl-L-methionine. The active-site Nucleophile is the C336.

Belongs to the class I-like SAM-binding methyltransferase superfamily. RNA M5U methyltransferase family. RlmC subfamily.

It catalyses the reaction uridine(747) in 23S rRNA + S-adenosyl-L-methionine = 5-methyluridine(747) in 23S rRNA + S-adenosyl-L-homocysteine + H(+). Its function is as follows. Catalyzes the formation of 5-methyl-uridine at position 747 (m5U747) in 23S rRNA. This Shewanella halifaxensis (strain HAW-EB4) protein is 23S rRNA (uracil(747)-C(5))-methyltransferase RlmC.